We begin with the raw amino-acid sequence, 442 residues long: Histidine--tRNA ligase (442 aa).

This sequence belongs to the class-II aminoacyl-tRNA synthetase family. As to quaternary structure, homodimer.

The protein localises to the cytoplasm. The enzyme catalyses tRNA(His) + L-histidine + ATP = L-histidyl-tRNA(His) + AMP + diphosphate + H(+). The protein is Histidine--tRNA ligase (hisS) of Helicobacter pylori (strain ATCC 700392 / 26695) (Campylobacter pylori).